The chain runs to 56 residues: Small ribosomal subunit protein uS14 (56 aa).

Zn(2+)-binding residues include Cys-21, Cys-24, Cys-39, and Cys-42.

This sequence belongs to the universal ribosomal protein uS14 family. In terms of assembly, component of the 40S small ribosomal subunit. It depends on Zn(2+) as a cofactor.

The protein resides in the cytoplasm. It is found in the cytosol. Its subcellular location is the rough endoplasmic reticulum. The chain is Small ribosomal subunit protein uS14 (RpS29) from Ixodes scapularis (Black-legged tick).